The following is a 518-amino-acid chain: Putative cytochrome P450 CYP13A6 (518 aa).

A heme-binding site is contributed by C463.

This sequence belongs to the cytochrome P450 family. Heme is required as a cofactor.

Its function is as follows. Cytochromes P450 are a group of heme-thiolate monooxygenases. They oxidize a variety of structurally unrelated compounds, including steroids, fatty acids, and xenobiotics. The sequence is that of Putative cytochrome P450 CYP13A6 (cyp-13A6) from Caenorhabditis elegans.